A 515-amino-acid chain; its full sequence is Cytidine and dCMP deaminase domain-containing protein 1 (515 aa).

Polar residues-rich tracts occupy residues 1 to 11 (MKEAGQMQNLE) and 18 to 27 (SVSTQTGSMT). Disordered stretches follow at residues 1–27 (MKEA…GSMT) and 56–83 (RQKS…STDK). The segment covering 60–83 (QKNEEGKHGPLGDNEEMTRVSTDK) has biased composition (basic and acidic residues). The 99-residue stretch at 71–169 (GDNEEMTRVS…SLLTEASSSE (99 aa)) folds into the CMP/dCMP-type deaminase 1 domain. Positions 110, 135, and 138 each coordinate Zn(2+). Residues 272–284 (NLRQNMKDLILLL) carry the Nuclear export signal motif. A CMP/dCMP-type deaminase 2 domain is found at 318-483 (EIARHCMVQA…LNPSGAYGLE (166 aa)). A Zn(2+)-binding site is contributed by H399. Catalysis depends on E401, which acts as the Proton donor. Residues C427 and C430 each contribute to the Zn(2+) site. The Bipartite nuclear localization signal motif lies at 489–511 (RRENGVLRPVPQKEEQHQDKKLC). The disordered stretch occupies residues 494–515 (VLRPVPQKEEQHQDKKLCLGIH).

The protein belongs to the cytidine and deoxycytidylate deaminase family. Zn(2+) serves as cofactor.

It is found in the cytoplasm. Its subcellular location is the nucleus. It carries out the reaction 2'-deoxycytidine + H2O + H(+) = 2'-deoxyuridine + NH4(+). The enzyme catalyses cytidine + H2O + H(+) = uridine + NH4(+). Its function is as follows. Catalyzes the deamination of cytidine and deoxycytidine into uridine and deoxyuridine, respectively. May play an important role in testicular development and spermatogenesis. The protein is Cytidine and dCMP deaminase domain-containing protein 1 (CDADC1) of Pongo abelii (Sumatran orangutan).